A 209-amino-acid chain; its full sequence is Ubiquinone biosynthesis protein COQ4 homolog 2, mitochondrial (209 aa).

Residues His-118, Asp-119, His-122, and Glu-134 each coordinate Zn(2+).

It belongs to the COQ4 family. In terms of assembly, component of a multi-subunit COQ enzyme complex. Requires Zn(2+) as cofactor.

It localises to the mitochondrion inner membrane. The enzyme catalyses a 4-hydroxy-3-methoxy-5-(all-trans-polyprenyl)benzoate + H(+) = a 2-methoxy-6-(all-trans-polyprenyl)phenol + CO2. Its pathway is cofactor biosynthesis; ubiquinone biosynthesis. Functionally, lyase that catalyzes the C1-decarboxylation of 4-hydroxy-3-methoxy-5-(all-trans-polyprenyl)benzoic acid into 2-methoxy-6-(all-trans-polyprenyl)phenol during ubiquinone biosynthesis. This Paramecium tetraurelia protein is Ubiquinone biosynthesis protein COQ4 homolog 2, mitochondrial.